Reading from the N-terminus, the 160-residue chain is Cytochrome b6-f complex subunit 4 (160 aa).

3 consecutive transmembrane segments (helical) span residues 36 to 56, 95 to 115, and 131 to 151; these read LLYL…GLAV, LLGV…PFIE, and LVFI…CLPI.

The protein belongs to the cytochrome b family. PetD subfamily. The 4 large subunits of the cytochrome b6-f complex are cytochrome b6, subunit IV (17 kDa polypeptide, petD), cytochrome f and the Rieske protein, while the 4 small subunits are petG, petL, petM and petN. The complex functions as a dimer.

It is found in the plastid. It localises to the chloroplast thylakoid membrane. In terms of biological role, component of the cytochrome b6-f complex, which mediates electron transfer between photosystem II (PSII) and photosystem I (PSI), cyclic electron flow around PSI, and state transitions. The protein is Cytochrome b6-f complex subunit 4 of Thalassiosira pseudonana (Marine diatom).